A 248-amino-acid chain; its full sequence is 2,3-bisphosphoglycerate-dependent phosphoglycerate mutase (248 aa).

Residues 8-15 (RHGESTWN), 21-22 (TG), R60, 87-90 (ERHY), K98, 114-115 (RR), and 183-184 (GN) each bind substrate. The active-site Tele-phosphohistidine intermediate is the H9. E87 functions as the Proton donor/acceptor in the catalytic mechanism.

It belongs to the phosphoglycerate mutase family. BPG-dependent PGAM subfamily. As to quaternary structure, homodimer.

It catalyses the reaction (2R)-2-phosphoglycerate = (2R)-3-phosphoglycerate. It participates in carbohydrate degradation; glycolysis; pyruvate from D-glyceraldehyde 3-phosphate: step 3/5. Its function is as follows. Catalyzes the interconversion of 2-phosphoglycerate and 3-phosphoglycerate. The protein is 2,3-bisphosphoglycerate-dependent phosphoglycerate mutase of Burkholderia ambifaria (strain ATCC BAA-244 / DSM 16087 / CCUG 44356 / LMG 19182 / AMMD) (Burkholderia cepacia (strain AMMD)).